Reading from the N-terminus, the 69-residue chain is Large ribosomal subunit protein uL29 (69 aa).

This sequence belongs to the universal ribosomal protein uL29 family.

This chain is Large ribosomal subunit protein uL29, found in Staphylococcus aureus (strain Mu3 / ATCC 700698).